Here is an 80-residue protein sequence, read N- to C-terminus: Cell division protein ZapB (80 aa).

A coiled-coil region spans residues 3–80 (LEILEQLEAK…GLLGKMEEVE (78 aa)). The disordered stretch occupies residues 41-62 (LEQANNGRSEVEQEAQKARDEQ). Residues 49–62 (SEVEQEAQKARDEQ) show a composition bias toward basic and acidic residues.

It belongs to the ZapB family. In terms of assembly, homodimer. The ends of the coiled-coil dimer bind to each other, forming polymers. Interacts with FtsZ.

The protein localises to the cytoplasm. Its function is as follows. Non-essential, abundant cell division factor that is required for proper Z-ring formation. It is recruited early to the divisome by direct interaction with FtsZ, stimulating Z-ring assembly and thereby promoting cell division earlier in the cell cycle. Its recruitment to the Z-ring requires functional FtsA or ZipA. The polypeptide is Cell division protein ZapB (Aliivibrio salmonicida (strain LFI1238) (Vibrio salmonicida (strain LFI1238))).